The chain runs to 736 residues: Nucleoporin nup60 (736 aa).

Residues 1–46 (MSSGPIRTLHKGKAARNRTPYDRIAASKDGNHSNGPQTPSKSIFQR) are disordered. Residues 19 to 31 (TPYDRIAASKDGN) are compositionally biased toward basic and acidic residues. Over residues 32-43 (HSNGPQTPSKSI) the composition is skewed to polar residues. 4 positions are modified to phosphoserine: S157, S159, S161, and S162. Disordered stretches follow at residues 178-210 (RAAA…NSAK), 295-321 (DTSF…KTPS), 338-519 (TPSI…PNET), 565-614 (AVTD…RSLF), and 647-701 (EQAE…FPKF). Polar residues-rich tracts occupy residues 196–210 (RTSS…NSAK) and 295–314 (DTSF…TTAN). Basic and acidic residues predominate over residues 375–397 (QIRPSSEKSEPEKKEPSAFETLE). Over residues 456-473 (SATTDKPSPPVSSIFSFN) the composition is skewed to polar residues. Composition is skewed to low complexity over residues 474 to 505 (APSA…TSFS) and 573 to 587 (EVSS…TMIS). Over residues 588-597 (QPNTGFSFGS) the composition is skewed to polar residues. The span at 664–692 (EVEKPSAEGTNEHKQDATMTLEKTDKQGS) shows a compositional bias: basic and acidic residues.

In terms of assembly, component of the nuclear pore complex (NPC). NPC constitutes the exclusive means of nucleocytoplasmic transport. NPCs allow the passive diffusion of ions and small molecules and the active, nuclear transport receptor-mediated bidirectional transport of macromolecules such as proteins, RNAs, ribonucleoparticles (RNPs), and ribosomal subunits across the nuclear envelope.

The protein localises to the nucleus. It localises to the nuclear pore complex. The protein resides in the nucleus membrane. Its function is as follows. Functions as a component of the nuclear pore complex (NPC). NPC components, collectively referred to as nucleoporins (NUPs), can play the role of both NPC structural components and of docking or interaction partners for transiently associated nuclear transport factors. Active directional transport is assured by both, a Phe-Gly (FG) repeat affinity gradient for these transport factors across the NPC and a transport cofactor concentration gradient across the nuclear envelope. The chain is Nucleoporin nup60 (nup60) from Schizosaccharomyces pombe (strain 972 / ATCC 24843) (Fission yeast).